Consider the following 448-residue polypeptide: CCA-adding enzyme (448 aa).

The ATP site is built by Ser-52 and Lys-55. CTP is bound by residues Ser-52 and Lys-55. Residues Asp-64, Asp-66, and Asp-118 each contribute to the Mg(2+) site. ATP-binding residues include His-141, Lys-160, and Tyr-169. Positions 141, 160, and 169 each coordinate CTP.

It belongs to the tRNA nucleotidyltransferase/poly(A) polymerase family. Archaeal CCA-adding enzyme subfamily. As to quaternary structure, homodimer. The cofactor is Mg(2+).

It carries out the reaction a tRNA precursor + 2 CTP + ATP = a tRNA with a 3' CCA end + 3 diphosphate. The catalysed reaction is a tRNA with a 3' CCA end + 2 CTP + ATP = a tRNA with a 3' CCACCA end + 3 diphosphate. Catalyzes the addition and repair of the essential 3'-terminal CCA sequence in tRNAs without using a nucleic acid template. Adds these three nucleotides in the order of C, C, and A to the tRNA nucleotide-73, using CTP and ATP as substrates and producing inorganic pyrophosphate. tRNA 3'-terminal CCA addition is required both for tRNA processing and repair. Also involved in tRNA surveillance by mediating tandem CCA addition to generate a CCACCA at the 3' terminus of unstable tRNAs. While stable tRNAs receive only 3'-terminal CCA, unstable tRNAs are marked with CCACCA and rapidly degraded. This chain is CCA-adding enzyme, found in Pyrococcus abyssi (strain GE5 / Orsay).